The chain runs to 212 residues: MPLNEIVGVVGNLISKGYIKKQSVIDALMSVPRHKFLPKNMEEYAYIDSPLGIGCGQTISAIHMVGIMCEELDLNMGQNVLEVGTGSGYQAAVVSKIVGESGKVTTVERIPELFEKSKQVLSELGYENVEAVLGDGTLGYLENSPYDRIYVTASGPNVPKALFEQLNDGGIILAPVGSHFQTLMRYKKTNGKIYEEKLLEVAFVPLIGENGF.

Residue Ser-60 is part of the active site.

Belongs to the methyltransferase superfamily. L-isoaspartyl/D-aspartyl protein methyltransferase family.

The protein resides in the cytoplasm. The catalysed reaction is [protein]-L-isoaspartate + S-adenosyl-L-methionine = [protein]-L-isoaspartate alpha-methyl ester + S-adenosyl-L-homocysteine. Functionally, catalyzes the methyl esterification of L-isoaspartyl residues in peptides and proteins that result from spontaneous decomposition of normal L-aspartyl and L-asparaginyl residues. It plays a role in the repair and/or degradation of damaged proteins. This chain is Protein-L-isoaspartate O-methyltransferase, found in Methanococcus maripaludis (strain C6 / ATCC BAA-1332).